The sequence spans 262 residues: 2-keto-4-pentenoate hydratase (262 aa).

Belongs to the hydratase/decarboxylase family. MhpD subfamily. A divalent metal cation is required as a cofactor.

The enzyme catalyses (S)-4-hydroxy-2-oxopentanoate = (2Z)-2-hydroxypenta-2,4-dienoate + H2O. It functions in the pathway aromatic compound metabolism; 3-phenylpropanoate degradation. Its function is as follows. Catalyzes the conversion of 2-hydroxypentadienoic acid (enolic form of 2-oxopent-4-enoate) to 4-hydroxy-2-ketopentanoic acid. In Paraburkholderia phymatum (strain DSM 17167 / CIP 108236 / LMG 21445 / STM815) (Burkholderia phymatum), this protein is 2-keto-4-pentenoate hydratase.